A 71-amino-acid chain; its full sequence is Small ribosomal subunit protein bS21 (71 aa).

Belongs to the bacterial ribosomal protein bS21 family.

In Buchnera aphidicola subsp. Schizaphis graminum (strain Sg), this protein is Small ribosomal subunit protein bS21.